Consider the following 216-residue polypeptide: Imidazole glycerol phosphate synthase subunit HisH (216 aa).

Residues 2–216 form the Glutamine amidotransferase type-1 domain; the sequence is RVAIIDYGSG…LISNFLRWKP (215 aa). Residue Cys88 is the Nucleophile of the active site. Residues His196 and Glu198 contribute to the active site.

In terms of assembly, heterodimer of HisH and HisF.

The protein resides in the cytoplasm. It carries out the reaction 5-[(5-phospho-1-deoxy-D-ribulos-1-ylimino)methylamino]-1-(5-phospho-beta-D-ribosyl)imidazole-4-carboxamide + L-glutamine = D-erythro-1-(imidazol-4-yl)glycerol 3-phosphate + 5-amino-1-(5-phospho-beta-D-ribosyl)imidazole-4-carboxamide + L-glutamate + H(+). The enzyme catalyses L-glutamine + H2O = L-glutamate + NH4(+). Its pathway is amino-acid biosynthesis; L-histidine biosynthesis; L-histidine from 5-phospho-alpha-D-ribose 1-diphosphate: step 5/9. In terms of biological role, IGPS catalyzes the conversion of PRFAR and glutamine to IGP, AICAR and glutamate. The HisH subunit catalyzes the hydrolysis of glutamine to glutamate and ammonia as part of the synthesis of IGP and AICAR. The resulting ammonia molecule is channeled to the active site of HisF. The protein is Imidazole glycerol phosphate synthase subunit HisH of Agrobacterium fabrum (strain C58 / ATCC 33970) (Agrobacterium tumefaciens (strain C58)).